The following is a 260-amino-acid chain: Indole-3-glycerol phosphate synthase (260 aa).

It belongs to the TrpC family.

The enzyme catalyses 1-(2-carboxyphenylamino)-1-deoxy-D-ribulose 5-phosphate + H(+) = (1S,2R)-1-C-(indol-3-yl)glycerol 3-phosphate + CO2 + H2O. It functions in the pathway amino-acid biosynthesis; L-tryptophan biosynthesis; L-tryptophan from chorismate: step 4/5. The sequence is that of Indole-3-glycerol phosphate synthase from Thermoanaerobacter pseudethanolicus (strain ATCC 33223 / 39E) (Clostridium thermohydrosulfuricum).